The sequence spans 995 residues: uncharacterized protein (995 aa).

This is an uncharacterized protein from Caenorhabditis elegans.